The primary structure comprises 523 residues: 26S proteasome regulatory subunit RPN3 (523 aa).

Residue Ala2 is modified to N-acetylalanine. The 181-residue stretch at Ala270–Asn450 folds into the PCI domain. Ser454 is subject to Phosphoserine. Residues Arg480 to Asn495 are compositionally biased toward basic and acidic residues. Residues Arg480–Leu523 form a disordered region. Positions Gly496–Leu523 are enriched in acidic residues.

It belongs to the proteasome subunit S3 family. As to quaternary structure, the 26S proteasome is composed of a core protease, known as the 20S proteasome, capped at one or both ends by the 19S regulatory complex (RC). The RC is composed of at least 18 different subunits in two subcomplexes, the base and the lid, which form the portions proximal and distal to the 20S proteolytic core, respectively. Post-translationally, N-acetylated by NAT1.

Its function is as follows. Acts as a regulatory subunit of the 26S proteasome which is involved in the ATP-dependent degradation of ubiquitinated proteins. The polypeptide is 26S proteasome regulatory subunit RPN3 (RPN3) (Saccharomyces cerevisiae (strain ATCC 204508 / S288c) (Baker's yeast)).